Reading from the N-terminus, the 475-residue chain is Aspartyl/glutamyl-tRNA(Asn/Gln) amidotransferase subunit B (475 aa).

The protein belongs to the GatB/GatE family. GatB subfamily. Heterotrimer of A, B and C subunits.

It catalyses the reaction L-glutamyl-tRNA(Gln) + L-glutamine + ATP + H2O = L-glutaminyl-tRNA(Gln) + L-glutamate + ADP + phosphate + H(+). It carries out the reaction L-aspartyl-tRNA(Asn) + L-glutamine + ATP + H2O = L-asparaginyl-tRNA(Asn) + L-glutamate + ADP + phosphate + 2 H(+). In terms of biological role, allows the formation of correctly charged Asn-tRNA(Asn) or Gln-tRNA(Gln) through the transamidation of misacylated Asp-tRNA(Asn) or Glu-tRNA(Gln) in organisms which lack either or both of asparaginyl-tRNA or glutaminyl-tRNA synthetases. The reaction takes place in the presence of glutamine and ATP through an activated phospho-Asp-tRNA(Asn) or phospho-Glu-tRNA(Gln). The protein is Aspartyl/glutamyl-tRNA(Asn/Gln) amidotransferase subunit B of Chlorobium chlorochromatii (strain CaD3).